A 239-amino-acid polypeptide reads, in one-letter code: Ribonuclease PH (239 aa).

Phosphate contacts are provided by residues R86 and 124–126; that span reads GTR.

Belongs to the RNase PH family. Homohexameric ring arranged as a trimer of dimers.

The catalysed reaction is tRNA(n+1) + phosphate = tRNA(n) + a ribonucleoside 5'-diphosphate. Functionally, phosphorolytic 3'-5' exoribonuclease that plays an important role in tRNA 3'-end maturation. Removes nucleotide residues following the 3'-CCA terminus of tRNAs; can also add nucleotides to the ends of RNA molecules by using nucleoside diphosphates as substrates, but this may not be physiologically important. Probably plays a role in initiation of 16S rRNA degradation (leading to ribosome degradation) during starvation. This Sinorhizobium fredii (strain NBRC 101917 / NGR234) protein is Ribonuclease PH.